A 569-amino-acid chain; its full sequence is Urease subunit alpha (569 aa).

The Ni(2+) site is built by H136, H138, and K219. Position 219 is an N6-carboxylysine (K219). H221 lines the substrate pocket. 2 residues coordinate Ni(2+): H248 and H274. Catalysis depends on H322, which acts as the Proton donor. D362 serves as a coordination point for Ni(2+).

The protein belongs to the metallo-dependent hydrolases superfamily. Urease alpha subunit family. Heterotrimer of UreA (gamma), UreB (beta) and UreC (alpha) subunits. Three heterotrimers associate to form the active enzyme. It depends on Ni cation as a cofactor. Post-translationally, carboxylation allows a single lysine to coordinate two nickel ions.

The protein resides in the cytoplasm. The enzyme catalyses urea + 2 H2O + H(+) = hydrogencarbonate + 2 NH4(+). Its pathway is nitrogen metabolism; urea degradation; CO(2) and NH(3) from urea (urease route): step 1/1. This is Urease subunit alpha from Microcystis aeruginosa (strain NIES-843 / IAM M-2473).